The chain runs to 327 residues: G protein pathway suppressor 2 (327 aa).

The stretch at 14 to 109 forms a coiled coil; it reads MARALHRHIM…RRRKEQSDLT (96 aa). Residues 26-65 form a disordered region; it reads RERKRQEEEEVDKMMEQKMKEEQERRKKKEMEERMSLEET. Glycyl lysine isopeptide (Lys-Gly) (interchain with G-Cter in SUMO1) cross-links involve residues K45 and K71. The segment at 61 to 94 is interaction with SUMO; the sequence is SLEETKEQILKLQEKLSALQEEKHQLFLQLKKVL. Disordered regions lie at residues 178 to 208, 253 to 285, and 300 to 327; these read GQFQ…SPSQ, QKQM…APGL, and KSGF…FYHK. The span at 253–271 shows a compositional bias: polar residues; the sequence is QKQMEHANQQTSFSDSSSL. At R312 the chain carries Asymmetric dimethylarginine. Over residues 317–327 the composition is skewed to polar residues; that stretch reads QHSQNPRFYHK. Asymmetric dimethylarginine; alternate is present on R323. R323 bears the Omega-N-methylarginine; alternate mark.

In terms of assembly, component of the N-Cor repressor complex, at least composed of NCOR1, NCOR2, HDAC3, TBL1X, TBL1R, CORO2A and GPS2. Interacts (when sumoylated at Lys-71) with TBL1X; leading to protect GPS2 from degradation by the proteasome. Interacts with UBE2N; leading to inhibit UBE2N/Ubc13 activity. Interacts with TRAF1. Interacts with TRAF2. Interacts with TRAF6. Interacts with PPARG (when in the liganded conformation). Interacts with (sumoylated) NR1H2; interaction with sumoylated NR1H2 and NR5A2 onto hepatic acute phase protein promoters prevents N-Cor corepressor complex dissociation. Interacts with (sumoylated) NR5A2; interaction with sumoylated NR1H2 and NR5A2 onto hepatic acute phase protein promoters prevents N-Cor corepressor complex dissociation. Interacts with NR1H3. Interacts with RFX4. Interacts with ANKRD26. Sumoylation regulates its subcellular location. Sumoylation at Lys-45 and Lys-71 regulates the shuttling between the cytoplasm and the nucleus. Sumoylation at Lys-71 is required for interaction with TBL1X. Sumoylated at Lys-45 and Lys-71 in mitochondrion. Desumoylation by SENP1 leads to relocation from the mitochondria to the nucleus. Post-translationally, ubiquitinated at the C-terminus by SIAH2; leading to its degradation by the proteasome. Interaction with TBL1X and methylation at Arg-323 protect GPS2 against ubiquitination and degradation. In terms of processing, methylated at Arg-312 and Arg-323 by PRMT6. Methylation at Arg-323 protects from degradation by the proteasome.

Its subcellular location is the nucleus. It is found in the mitochondrion. It localises to the cytoplasm. The protein localises to the cytosol. Its function is as follows. Key regulator of inflammation, lipid metabolism and mitochondrion homeostasis that acts by inhibiting the activity of the ubiquitin-conjugating enzyme UBE2N/Ubc13, thereby inhibiting 'Lys-63'-linked ubiquitination. In the nucleus, can both acts as a corepressor and coactivator of transcription, depending on the context. Acts as a transcription coactivator in adipocytes by promoting the recruitment of PPARG to promoters: acts by inhibiting the activity of the ubiquitin-conjugating enzyme UBE2N/Ubc13, leading to stabilization of KDM4A and subsequent histone H3 'Lys-9' (H3K9) demethylation. Promotes cholesterol efflux by acting as a transcription coactivator. Acts as a regulator of B-cell development by inhibiting UBE2N/Ubc13, thereby restricting the activation of Toll-like receptors (TLRs) and B-cell antigen receptors (BCRs) signaling pathways. Acts as a key mediator of mitochondrial stress response: in response to mitochondrial depolarization, relocates from the mitochondria to the nucleus following desumoylation and specifically promotes expression of nuclear-encoded mitochondrial genes. Promotes transcription of nuclear-encoded mitochondrial genes by inhibiting UBE2N/Ubc13. Can also act as a corepressor as part of the N-Cor repressor complex by repressing active PPARG. Plays an anti-inflammatory role in macrophages and is required for insulin sensitivity by acting as a corepressor. Plays an anti-inflammatory role during the hepatic acute phase response by interacting with sumoylated NR1H2 and NR5A2 proteins, thereby preventing N-Cor corepressor complex dissociation. In the cytosol, also plays a non-transcriptional role by regulating insulin signaling and pro-inflammatory pathways. In the cytoplasm, acts as a negative regulator of inflammation by inhibiting the pro-inflammatory TNF-alpha pathway; acts by repressing UBE2N/Ubc13 activity. In the cytoplasm of adipocytes, restricts the activation of insulin signaling via inhibition of UBE2N/Ubc13-mediated ubiquitination of AKT. Able to suppress G-protein- and mitogen-activated protein kinase-mediated signal transduction. The polypeptide is G protein pathway suppressor 2 (Mus musculus (Mouse)).